The following is a 368-amino-acid chain: MPDIVNRKVEHVEIAAFENVDGLSSSTFLNDVILVHQGFPGISFSEINTKTKFFRKEISVPIMVTGMTGGRNELGRINKIIAEVTEKFGIPMGVGSQRVAIEKAEARESFAIVRKVAPTIPIIANLGMPQLVKGYGLKEFQDAIQMIEADAIAVHLNPAQEVFQPEGEPEYQIYALEKLRDISKELSVPIIVKESGNGISMETAKLLYSYGIKNFDTSGQGGTNWIAIEMIRDIRRGNWKAESAKNFLDWGVPTAASIMEVRYSVPDSFLVGSGGIRSGLDAAKAIALGADIAGMALPVLKSAIEGKESLEQFFRKIIFELKAAMMLTGSKDVNALKKTSIVILGKLKEWAEYRGINLSTYDKVRKRE.

A substrate-binding site is contributed by 7–8 (RK). FMN is bound by residues Thr65, 66-68 (GMT), Ser96, and Asn125. 96 to 98 (SQR) contributes to the substrate binding site. Gln160 contacts substrate. Glu161 is a binding site for Mg(2+). FMN contacts are provided by residues Lys193, Ser218, Thr223, 275–277 (GIR), and 296–297 (AL).

The protein belongs to the IPP isomerase type 2 family. As to quaternary structure, homooctamer. Dimer of tetramers. FMN is required as a cofactor. It depends on NADPH as a cofactor. The cofactor is Mg(2+).

The protein localises to the cytoplasm. The enzyme catalyses isopentenyl diphosphate = dimethylallyl diphosphate. Involved in the biosynthesis of isoprenoids. Catalyzes the 1,3-allylic rearrangement of the homoallylic substrate isopentenyl (IPP) to its allylic isomer, dimethylallyl diphosphate (DMAPP). This is Isopentenyl-diphosphate delta-isomerase from Saccharolobus islandicus (strain L.S.2.15 / Lassen #1) (Sulfolobus islandicus).